We begin with the raw amino-acid sequence, 1047 residues long: Ras GTPase-activating protein 1 (1047 aa).

Position 1 is an N-acetylmethionine (Met-1). The region spanning 181–272 is the SH2 1 domain; that stretch reads WYHGKLDRTI…LKGEKLLYPV (92 aa). An SH3 domain is found at 279–341; it reads EDRRRVRAIL…VEDLVEEVGR (63 aa). Residues 351 to 441 form the SH2 2 domain; the sequence is WFHGKISKQE…VEGYYLKEPV (91 aa). The region spanning 474 to 577 is the PH domain; sequence NIVKKGYLLK…WMKGLQAFCN (104 aa). The C2 domain occupies 577–690; that stretch reads NLRKSSPGTS…QKGHATDEWF (114 aa). Tyr-615 carries the post-translational modification Phosphotyrosine. In terms of domain architecture, Ras-GAP spans 764 to 974; the sequence is KLESLLLCTL…HRMIMFLDEL (211 aa). At Ser-831 the chain carries Phosphoserine.

As to quaternary structure, interacts with SQSTM1. Interacts with SPSB1; the interaction does not promote degradation. Interacts with CAV2 (tyrosine phosphorylated form). Directly interacts with NCK1. Interacts with PDGFRB (tyrosine phosphorylated). Interacts (via SH2 domain) with the 'Tyr-9' phosphorylated form of PDPK1. Interacts with tyrosine-phosphorylated EPHB4. In terms of processing, the N-terminus is blocked. Post-translationally, phosphorylated by SRC and LCK. The phosphorylation SRC inhibits its ability to stimulate the Ras-GTPase activity, whereas phosphorylation by LCK does not display any effect on stimulation activity. As to expression, in placental villi, detected only in the trophoblast layer (cytotrophoblast and syncytiotrophoblast). Not detected in stromal, endothelial or Hofbauer cells (at protein level).

The protein resides in the cytoplasm. Functionally, inhibitory regulator of the Ras-cyclic AMP pathway. Stimulates the GTPase of normal but not oncogenic Ras p21; this stimulation may be further increased in the presence of NCK1. The polypeptide is Ras GTPase-activating protein 1 (RASA1) (Homo sapiens (Human)).